The primary structure comprises 989 residues: Putative transcription elongation factor SPT5 homolog 2 (989 aa).

Positions 1-26 are enriched in acidic residues; sequence MSQYSDDDYSHEDDSEMEDEDEEDEY. Residues 1 to 82 are disordered; that stretch reads MSQYSDDDYS…VEDDDDDVDV (82 aa). Positions 31 to 42 are enriched in basic residues; the sequence is SRKGRSGKKRGR. Residues 65–82 are compositionally biased toward acidic residues; it reads WEVEVDDDVEDDDDDVDV. KOW domains are found at residues 260–287, 412–439, 464–491, 588–615, and 683–710; these read DLSR…VDNV, HFMK…VDEE, YFEP…VDQH, VVAV…IYKG, and DHLV…VKDK. A disordered region spans residues 790-852; it reads MSPPRDNWED…SPMTPSSTSY (63 aa). Low complexity predominate over residues 842 to 852; sequence PSPMTPSSTSY. The KOW 6 domain maps to 936-963; sequence CPKKNERVKILGGKYCGSTAKVIGEDGQ.

This sequence belongs to the SPT5 family.

The protein resides in the nucleus. Functionally, may regulate transcription elongation by RNA polymerase II. May enhance transcriptional pausing at sites proximal to the promoter, which may in turn facilitate the assembly of an elongation competent RNA polymerase II complex. This is Putative transcription elongation factor SPT5 homolog 2 from Arabidopsis thaliana (Mouse-ear cress).